Here is a 190-residue protein sequence, read N- to C-terminus: Putative resolvase R771 (190 aa).

Positions 11–30 form a DNA-binding region, H-T-H motif; it reads SSVLGVHQRTLYQWDKKGWI. The Resolvase/invertase-type recombinase catalytic domain maps to 61 to 190; that stretch reads LSICYVRVSS…RNGLKKYSNK (130 aa). Residues 66–92 adopt a coiled-coil conformation; that stretch reads VRVSSNNQKDDLERQIKFMKKKYPNHT. Residue serine 69 is the O-(5'-phospho-DNA)-serine intermediate of the active site.

Belongs to the site-specific recombinase resolvase family.

Its function is as follows. Resolvase catalyzes the resolution (a site-specific recombination) of the cointegrated replicon to yield the final transposition products. This chain is Putative resolvase R771, found in Acanthamoeba polyphaga (Amoeba).